Here is a 598-residue protein sequence, read N- to C-terminus: Vanadium-dependent bromoperoxidase (598 aa).

Ca(2+) is bound by residues F361, Q363, D365, D368, and Q370. The vanadate site is built by K400 and R408. H480 is a catalytic residue. Residues S485, G486, H487, R547, and H553 each contribute to the vanadate site. H487 is an active-site residue.

This sequence belongs to the vanadium-dependent haloperoxidase family. Homododecamer. The cofactor is Ca(2+). Vanadate serves as cofactor.

The enzyme catalyses RH + Br(-) + H2O2 = RBr + 2 H2O.. Functionally, catalyzes the halogenation of organic substrates in the presence of hydrogen peroxide. The sequence is that of Vanadium-dependent bromoperoxidase from Corallina officinalis (Coral seaweed).